Consider the following 506-residue polypeptide: MIFQKRTFFIKRGCVLNIRVRYAPSPTGLQHIGGIRTALFNYFFAKSFNGKFLLRIEDTDQTRYYKEAEEDLYQSLAWLGIDFDEGPTCGGSYSPYIQSQRTEIYRKYAKELIESGNAYYCYCSPDRLERIRKIQTINKMAPGYDRHCRHLNKDEIKDALSLGISPVIRFKIPFDGETSFNDILLGKITWANKDISPDPVILKSDGFPTYHLANVVDDHLMEISHVLRAQEWISSGPLHVLLYNAFRWNPPIYCHLPMVMGSDGQKLSKRHGATALKQFIDDGYLPEAIINYVTLLGWSYDGKSEFFTKNELQKLFSIDKISKSPAVFDYNKLDFFNSHYIRTKEDHELAELLLPFLQKAGYIKKDSNSCDKEKLLLLVPLIKPRIRKLGDAVGMLRFFYTNISTWNLNEFLGKKKTVRDIYLLLEKIKPVLEGFETRILSENEQIFYNFAKENDLKIGEVLLPIRIAVLGSKVSPPLFDSLQLLGKVTVFDRINKAQDFLKKYEL.

The 'HIGH' region motif lies at 24–34 (PSPTGLQHIGG). Residues cysteine 121, cysteine 123, cysteine 148, and histidine 150 each coordinate Zn(2+). Residues 266–270 (KLSKR) carry the 'KMSKS' region motif. Residue lysine 269 participates in ATP binding.

It belongs to the class-I aminoacyl-tRNA synthetase family. Glutamate--tRNA ligase type 1 subfamily. Monomer. Zn(2+) serves as cofactor.

It localises to the cytoplasm. The enzyme catalyses tRNA(Glu) + L-glutamate + ATP = L-glutamyl-tRNA(Glu) + AMP + diphosphate. In terms of biological role, catalyzes the attachment of glutamate to tRNA(Glu) in a two-step reaction: glutamate is first activated by ATP to form Glu-AMP and then transferred to the acceptor end of tRNA(Glu). The chain is Glutamate--tRNA ligase from Borrelia duttonii (strain Ly).